Here is a 275-residue protein sequence, read N- to C-terminus: Light-independent protochlorophyllide reductase iron-sulfur ATP-binding protein (275 aa).

ATP contacts are provided by residues 12–17 (GIGKST) and Lys41. Mg(2+) is bound at residue Ser16. Cys97 and Cys131 together coordinate [4Fe-4S] cluster. ATP is bound at residue 182 to 183 (NR).

Belongs to the NifH/BchL/ChlL family. Homodimer. Protochlorophyllide reductase is composed of three subunits; BchL, BchN and BchB. [4Fe-4S] cluster serves as cofactor.

It carries out the reaction chlorophyllide a + oxidized 2[4Fe-4S]-[ferredoxin] + 2 ADP + 2 phosphate = protochlorophyllide a + reduced 2[4Fe-4S]-[ferredoxin] + 2 ATP + 2 H2O. Its pathway is porphyrin-containing compound metabolism; bacteriochlorophyll biosynthesis (light-independent). In terms of biological role, component of the dark-operative protochlorophyllide reductase (DPOR) that uses Mg-ATP and reduced ferredoxin to reduce ring D of protochlorophyllide (Pchlide) to form chlorophyllide a (Chlide). This reaction is light-independent. The L component serves as a unique electron donor to the NB-component of the complex, and binds Mg-ATP. The sequence is that of Light-independent protochlorophyllide reductase iron-sulfur ATP-binding protein from Prosthecochloris aestuarii (strain DSM 271 / SK 413).